Consider the following 404-residue polypeptide: Synaptic vesicle membrane protein VAT-1 homolog (404 aa).

The disordered stretch occupies residues 1 to 55; the sequence is MSAEREATEAATVAAAAEARAETGAGEGAPSQPPTVEVASDPQPPPAPEASASAS. Ser2 bears the N-acetylserine mark. Ser2 carries the post-translational modification Phosphoserine. Positions 9-24 are enriched in low complexity; the sequence is EAATVAAAAEARAETG. A phosphoserine mark is found at Ser31 and Ser40.

Belongs to the zinc-containing alcohol dehydrogenase family. Quinone oxidoreductase subfamily. In terms of assembly, interacts with MFN1 and MFN2. Ubiquitously expressed.

Its subcellular location is the cytoplasm. It is found in the mitochondrion outer membrane. Its function is as follows. Plays a part in calcium-regulated keratinocyte activation in epidermal repair mechanisms. Has no effect on cell proliferation. Possesses ATPase activity. May negatively regulate mitochondrial fusion. This is Synaptic vesicle membrane protein VAT-1 homolog (Vat1) from Rattus norvegicus (Rat).